The following is a 115-amino-acid chain: Regulator of ribonuclease activity B (115 aa).

It belongs to the RraB family. In terms of assembly, interacts with the C-terminal region of Rne.

Its subcellular location is the cytoplasm. Its function is as follows. Globally modulates RNA abundance by binding to RNase E (Rne) and regulating its endonucleolytic activity. Can modulate Rne action in a substrate-dependent manner by altering the composition of the degradosome. This Aeromonas salmonicida (strain A449) protein is Regulator of ribonuclease activity B.